Here is a 375-residue protein sequence, read N- to C-terminus: Actin-binding Rho-activating protein (375 aa).

Composition is skewed to basic and acidic residues over residues 1–11 (MAPGEREREAG) and 79–99 (KPDR…SHIK). 2 disordered regions span residues 1 to 20 (MAPG…LRKV) and 38 to 99 (NENS…SHIK). 2 positions are modified to phosphoserine: S150 and S182. Over residues 173–182 (QEEPTWKSDS) the composition is skewed to basic and acidic residues. The interval 173 to 204 (QEEPTWKSDSVDTEDSGYGGDMEERPEQDAAP) is disordered. Actin-binding regions lie at residues 193–293 (DMEE…AERA) and 294–375 (KRAE…TLLE). 2 interaction with actin regions span residues 234–279 (SQVD…GDEG) and 346–375 (MRAR…TLLE).

In terms of assembly, binds F-actin and ABLIM1, ABLIM2 and ABLIM3. Interaction with ABLIM2 and ABLIM3 enhances activity. Expressed specifically in heart and skeletal muscle.

Its subcellular location is the cytoplasm. It is found in the myofibril. The protein localises to the sarcomere. The protein resides in the cytoskeleton. Functionally, acts as an activator of serum response factor (SRF)-dependent transcription possibly by inducing nuclear translocation of MKL1 or MKL2 and through a mechanism requiring Rho-actin signaling. The protein is Actin-binding Rho-activating protein of Mus musculus (Mouse).